Here is a 310-residue protein sequence, read N- to C-terminus: MASRDFLGRFGGEKGASSDKAGGGAGEPDEVVELSLGLSLGGCFGANSGRDAKKPRLVRSSSLAAMCSLPGTSDDIAAATPPPAPLMRTSSLPTETEEERWRRREMQSLKRLQAKRKRLERRTSMNSGKSGGSSSRDDAQEPLYPSAFQLRRSVVDQGNASSSMPEQGSGDGAEAKSTSSMEISSDNNNQNKSLPPPAPSTAGKLPNGIVKEQPPLRTLRSLTMRTTSTGDLRKSMMEDMPIVSSKVDGPNSKKIDGFLYKYRKGEEVRIVCVCHGNFLTPAEFVKHAGGGDVTNPLRHIVVNPSPSVFL.

Disordered stretches follow at residues 1-29 (MASR…GEPD), 68-140 (SLPG…DDAQ), and 156-215 (DQGN…EQPP). Residues 99 to 108 (ERWRRREMQS) show a composition bias toward basic and acidic residues. Composition is skewed to polar residues over residues 156 to 166 (DQGNASSSMPE) and 176 to 193 (KSTS…QNKS).

The protein belongs to the Ninja family.

Its subcellular location is the nucleus. This is Ninja-family protein 3 (AFP-D1) from Triticum aestivum (Wheat).